A 190-amino-acid chain; its full sequence is dCTP deaminase, dUMP-forming (190 aa).

Residues 101-106 (KSSLGR), aspartate 119, 127-129 (TLE), glutamine 148, tyrosine 162, and glutamine 174 contribute to the dCTP site. Residue glutamate 129 is the Proton donor/acceptor of the active site. Residues 161–190 (PYGSSGVGSKYQGQRGPTPSRSYQNFIRST) are disordered. Residues 171 to 190 (YQGQRGPTPSRSYQNFIRST) are compositionally biased toward polar residues.

The protein belongs to the dCTP deaminase family. In terms of assembly, homotrimer.

The catalysed reaction is dCTP + 2 H2O = dUMP + NH4(+) + diphosphate. It participates in pyrimidine metabolism; dUMP biosynthesis; dUMP from dCTP: step 1/1. Functionally, bifunctional enzyme that catalyzes both the deamination of dCTP to dUTP and the hydrolysis of dUTP to dUMP without releasing the toxic dUTP intermediate. This chain is dCTP deaminase, dUMP-forming, found in Mycobacterium ulcerans (strain Agy99).